The chain runs to 450 residues: Putative gustatory receptor 28a (450 aa).

Residues 1–47 lie on the Cytoplasmic side of the membrane; that stretch reads MAFKLWERFSQADNVFQALRPLTFISLLGLAPFRLNLNPRKEVQTSK. Residues 48–68 form a helical membrane-spanning segment; the sequence is FSFFAGIVHFLFFVLCFGISV. Residues 69–87 are Extracellular-facing; sequence KEGDSIIGYFFQTNITRFS. Residue asparagine 82 is glycosylated (N-linked (GlcNAc...) asparagine). The helical transmembrane segment at 88–108 threads the bilayer; sequence DGTLRLTGILAMSTIFGFAMF. The Cytoplasmic segment spans residues 109-138; that stretch reads KRQRLVSIIQNNIVVDEIFVRLGMKLDYRR. Residues 139–159 form a helical membrane-spanning segment; it reads ILLSSFLISLGMLLFNVIYLC. Residues 160–171 are Extracellular-facing; sequence VSYSLLVSATIS. The chain crosses the membrane as a helical span at residues 172–192; the sequence is PSFVTFTTFALPHINISLMVF. The Cytoplasmic portion of the chain corresponds to 193–292; sequence KFLCTTDLAR…CQTIEEYFTY (100 aa). Residues 293–313 form a helical membrane-spanning segment; it reads PLLGIIAISFLFILFDDFYIL. Residues 314-329 are Extracellular-facing; sequence EAILNPKRLDVFEADE. A helical membrane pass occupies residues 330 to 350; sequence FFAFFLMQLIWYIVIIVLIVE. At 351-407 the chain is on the cytoplasmic side; sequence GSSRTILHSSYTAAIVHKILNITDDPELRDRLFRLSLQLSHRKVLFTAAGLFRLDRT. A helical transmembrane segment spans residues 408-424; sequence LIFTITGAATCYLIILI. Residues 425–450 are Extracellular-facing; sequence QFRFTHHMDDTSSNSTNNLHSIHLGD. The N-linked (GlcNAc...) asparagine glycan is linked to asparagine 438.

It belongs to the insect chemoreceptor superfamily. Gustatory receptor (GR) family. Gr2a subfamily. In addition to expression in a large number of taste neurons, Gr28a is also expressed in a few nonchemosensory neurons, including the campaniform sensilla of the wing, leg stretch receptors, and multiple dendritic (MD) neurons in the abdomen. In larvea, is expressed in neurons of the terminal external chemosensory organ, the dorsal external chemosensory organ, as well as in the ventral and posterior pharyngeal sense organ.

The protein resides in the cell membrane. Functionally, probable gustatory receptor which mediates acceptance or avoidance behavior, depending on its substrates. Atypical expression also suggests nongustatory roles in the nervous system and tissues involved in proprioception, hygroreception, and other sensory modalities. It is also possible that it has chemosensory roles in the detection of internal ligands. This is Putative gustatory receptor 28a (Gr28a) from Drosophila melanogaster (Fruit fly).